The chain runs to 666 residues: 1-deoxy-D-xylulose-5-phosphate synthase (666 aa).

Thiamine diphosphate contacts are provided by residues histidine 103 and 144 to 146; that span reads AHS. Aspartate 175 contributes to the Mg(2+) binding site. Residues 176-177, asparagine 204, tyrosine 314, and glutamate 396 each bind thiamine diphosphate; that span reads GA. A Mg(2+)-binding site is contributed by asparagine 204.

The protein belongs to the transketolase family. DXPS subfamily. In terms of assembly, homodimer. Mg(2+) serves as cofactor. Thiamine diphosphate is required as a cofactor.

The catalysed reaction is D-glyceraldehyde 3-phosphate + pyruvate + H(+) = 1-deoxy-D-xylulose 5-phosphate + CO2. It functions in the pathway metabolic intermediate biosynthesis; 1-deoxy-D-xylulose 5-phosphate biosynthesis; 1-deoxy-D-xylulose 5-phosphate from D-glyceraldehyde 3-phosphate and pyruvate: step 1/1. Its function is as follows. Catalyzes the acyloin condensation reaction between C atoms 2 and 3 of pyruvate and glyceraldehyde 3-phosphate to yield 1-deoxy-D-xylulose-5-phosphate (DXP). The protein is 1-deoxy-D-xylulose-5-phosphate synthase of Nitrobacter winogradskyi (strain ATCC 25391 / DSM 10237 / CIP 104748 / NCIMB 11846 / Nb-255).